Consider the following 670-residue polypeptide: Beta-lactam-inducible penicillin-binding protein (670 aa).

The helical transmembrane segment at 4–24 (IKIVPLILIVVVVGFGIYFYA) threads the bilayer. Residues serine 25 and serine 405 each contribute to the a penicillin site. The Acyl-ester intermediate role is filled by serine 405.

Belongs to the transpeptidase family.

The protein localises to the cell membrane. This Staphylococcus aureus protein is Beta-lactam-inducible penicillin-binding protein (pbp).